The chain runs to 847 residues: Follistatin-related protein 5 (847 aa).

An N-terminal signal peptide occupies residues methionine 1–glycine 20. Positions glycine 83–phenylalanine 135 constitute a Kazal-like domain. Disulfide bonds link cysteine 89/cysteine 119, cysteine 93/cysteine 112, and cysteine 101/cysteine 133. 2 consecutive EF-hand domains span residues arginine 175–glycine 210 and lysine 211–glutamine 246. The Ca(2+) site is built by aspartate 188, aspartate 190, asparagine 192, glutamate 199, aspartate 226, asparagine 228, aspartate 230, histidine 232, and glutamate 237. Ig-like domains follow at residues proline 250–valine 337 and proline 341–serine 426. 2 disulfides stabilise this stretch: cysteine 270-cysteine 321 and cysteine 362-cysteine 413. Residues asparagine 318 and asparagine 394 are each glycosylated (N-linked (GlcNAc...) asparagine).

The protein resides in the secreted. This chain is Follistatin-related protein 5 (FSTL5), found in Homo sapiens (Human).